A 282-amino-acid chain; its full sequence is HTH-type transcriptional activator RhaR (282 aa).

The region spanning Asp-179–Leu-277 is the HTH araC/xylS-type domain. DNA-binding regions (H-T-H motif) lie at residues Asp-196 to Thr-217 and Ile-244 to Thr-267.

As to quaternary structure, binds DNA as a dimer.

It is found in the cytoplasm. Its function is as follows. Activates expression of the rhaSR operon in response to L-rhamnose. This chain is HTH-type transcriptional activator RhaR, found in Salmonella dublin (strain CT_02021853).